Consider the following 85-residue polypeptide: Large ribosomal subunit protein bL27 (85 aa).

Positions 1-13 are enriched in polar residues; the sequence is MAKTKSGGSTSNG. Residues 1-26 form a disordered region; the sequence is MAKTKSGGSTSNGRDSKGRRLGQKLG.

It belongs to the bacterial ribosomal protein bL27 family.

The protein is Large ribosomal subunit protein bL27 of Mycoplasma mobile (strain ATCC 43663 / 163K / NCTC 11711) (Mesomycoplasma mobile).